Here is a 173-residue protein sequence, read N- to C-terminus: Crossover junction endodeoxyribonuclease RuvC (173 aa).

Residues Asp-8, Glu-67, and Asp-139 contribute to the active site. Mg(2+) is bound by residues Asp-8, Glu-67, and Asp-139.

The protein belongs to the RuvC family. Homodimer which binds Holliday junction (HJ) DNA. The HJ becomes 2-fold symmetrical on binding to RuvC with unstacked arms; it has a different conformation from HJ DNA in complex with RuvA. In the full resolvosome a probable DNA-RuvA(4)-RuvB(12)-RuvC(2) complex forms which resolves the HJ. The cofactor is Mg(2+).

Its subcellular location is the cytoplasm. It catalyses the reaction Endonucleolytic cleavage at a junction such as a reciprocal single-stranded crossover between two homologous DNA duplexes (Holliday junction).. In terms of biological role, the RuvA-RuvB-RuvC complex processes Holliday junction (HJ) DNA during genetic recombination and DNA repair. Endonuclease that resolves HJ intermediates. Cleaves cruciform DNA by making single-stranded nicks across the HJ at symmetrical positions within the homologous arms, yielding a 5'-phosphate and a 3'-hydroxyl group; requires a central core of homology in the junction. The consensus cleavage sequence is 5'-(A/T)TT(C/G)-3'. Cleavage occurs on the 3'-side of the TT dinucleotide at the point of strand exchange. HJ branch migration catalyzed by RuvA-RuvB allows RuvC to scan DNA until it finds its consensus sequence, where it cleaves and resolves the cruciform DNA. The polypeptide is Crossover junction endodeoxyribonuclease RuvC (Shewanella sediminis (strain HAW-EB3)).